A 317-amino-acid polypeptide reads, in one-letter code: Tyrosine--tRNA ligase (317 aa).

Tyr-33 lines the L-tyrosine pocket. Positions 38 to 46 (PSGKIHMGH) match the 'HIGH' region motif. 4 residues coordinate L-tyrosine: Tyr-155, Gln-159, Asp-162, and Gln-177. A 'KMSKS' region motif is present at residues 211–215 (KMSSS). Ser-214 contacts ATP.

The protein belongs to the class-I aminoacyl-tRNA synthetase family. TyrS type 3 subfamily. In terms of assembly, homodimer.

It is found in the cytoplasm. The catalysed reaction is tRNA(Tyr) + L-tyrosine + ATP = L-tyrosyl-tRNA(Tyr) + AMP + diphosphate + H(+). Its function is as follows. Catalyzes the attachment of tyrosine to tRNA(Tyr) in a two-step reaction: tyrosine is first activated by ATP to form Tyr-AMP and then transferred to the acceptor end of tRNA(Tyr). In Methanococcoides burtonii (strain DSM 6242 / NBRC 107633 / OCM 468 / ACE-M), this protein is Tyrosine--tRNA ligase.